The following is a 125-amino-acid chain: Fluoride-specific ion channel FluC (125 aa).

4 consecutive transmembrane segments (helical) span residues 5 to 25 (FVFI…LAGF), 33 to 53 (FFPF…GFLW), 69 to 89 (FVLV…LETG), and 101 to 121 (IVNL…GIVL). 2 residues coordinate Na(+): Gly76 and Thr79.

Belongs to the fluoride channel Fluc/FEX (TC 1.A.43) family.

It is found in the cell inner membrane. The catalysed reaction is fluoride(in) = fluoride(out). Its activity is regulated as follows. Na(+) is not transported, but it plays an essential structural role and its presence is essential for fluoride channel function. Its function is as follows. Fluoride-specific ion channel. Important for reducing fluoride concentration in the cell, thus reducing its toxicity. This is Fluoride-specific ion channel FluC from Desulforapulum autotrophicum (strain ATCC 43914 / DSM 3382 / VKM B-1955 / HRM2) (Desulfobacterium autotrophicum).